The sequence spans 313 residues: Olfactory receptor 56A5 (313 aa).

At 1 to 33 the chain is on the extracellular side; it reads MTLPSNNSTSPVFEFFLICFPSFQSWQHWLSLP. N-linked (GlcNAc...) asparagine glycans are attached at residues N6 and N7. The chain crosses the membrane as a helical span at residues 34–54; the sequence is LSLLFLLAMGANATLLITIYL. The Cytoplasmic portion of the chain corresponds to 55–67; that stretch reads EASLHQPLYYLLS. Residues 68–88 form a helical membrane-spanning segment; sequence LLSLLDIVLCLTVIPKVLAIF. Over 89–100 the chain is Extracellular; the sequence is WFDLRSISFPAC. C100 and C182 form a disulfide bridge. A helical transmembrane segment spans residues 101–121; sequence FLQVFIMNSFLTMESCTFMIM. Residues 122–146 are Cytoplasmic-facing; the sequence is AYDRYVAICKPLQYSSIITDQFVAR. A helical transmembrane segment spans residues 147 to 167; the sequence is AAIFVVARNGLLTMPIPILSS. At 168-203 the chain is on the extracellular side; it reads RLRYCAGHIIKNCICTNVSVSKLSCDDITLNQSYQF. N-linked (GlcNAc...) asparagine glycans are attached at residues N184 and N198. Residues 204–224 traverse the membrane as a helical segment; sequence VIGWTLLGSDLILIVLSYFFI. Residues 225-246 lie on the Cytoplasmic side of the membrane; that stretch reads LKTVLRIKGEGDMAKALGTCGS. A helical transmembrane segment spans residues 247-267; the sequence is HFILILFFTTVLLVLVITNLA. Topologically, residues 268–276 are extracellular; that stretch reads RKRIPPDVP. A helical membrane pass occupies residues 277 to 297; the sequence is ILLNILHHLIPPALNPIVYGV. At 298–313 the chain is on the cytoplasmic side; it reads RTKEIKQGIQNLLRRL.

It belongs to the G-protein coupled receptor 1 family.

The protein resides in the cell membrane. In terms of biological role, odorant receptor. The sequence is that of Olfactory receptor 56A5 (OR56A5) from Homo sapiens (Human).